We begin with the raw amino-acid sequence, 326 residues long: Aspartate carbamoyltransferase catalytic subunit (326 aa).

Carbamoyl phosphate-binding residues include arginine 58 and threonine 59. Lysine 86 provides a ligand contact to L-aspartate. Carbamoyl phosphate is bound by residues arginine 108, histidine 141, and glutamine 144. Residues arginine 181 and arginine 239 each contribute to the L-aspartate site. Carbamoyl phosphate-binding residues include glycine 280 and proline 281.

The protein belongs to the aspartate/ornithine carbamoyltransferase superfamily. ATCase family. In terms of assembly, heterododecamer (2C3:3R2) of six catalytic PyrB chains organized as two trimers (C3), and six regulatory PyrI chains organized as three dimers (R2).

The catalysed reaction is carbamoyl phosphate + L-aspartate = N-carbamoyl-L-aspartate + phosphate + H(+). The protein operates within pyrimidine metabolism; UMP biosynthesis via de novo pathway; (S)-dihydroorotate from bicarbonate: step 2/3. Functionally, catalyzes the condensation of carbamoyl phosphate and aspartate to form carbamoyl aspartate and inorganic phosphate, the committed step in the de novo pyrimidine nucleotide biosynthesis pathway. In Synechococcus sp. (strain JA-3-3Ab) (Cyanobacteria bacterium Yellowstone A-Prime), this protein is Aspartate carbamoyltransferase catalytic subunit.